We begin with the raw amino-acid sequence, 304 residues long: MENSHLGSLTTERRNERSKRIHQAETIDMLKIMNDEDKTVAEAVQEVLPDVKTAVDYAVGSLKKGGRIIYIGAGTSGRLGVLDAAECPPTFSISPESVIGIIAGGEKALYNAVEGAEDHEAFGRRDLEAVNLSNNDTVIGIAASGRTPYVLGALKYAKKTGAKAISLTCNENSAISQAADHSIEVVVGPEVIAGSTRMKAATAHKMILNMISTAAMIKMGKVYENLMVDVKVSNDKLKERAIRIIQTVTGMPNETAAQALEMSNNQVKTAIIMLKTNEDAAAAEKLLEKSEGDIEKALSIYEKS.

Over residues 1–10 the composition is skewed to polar residues; that stretch reads MENSHLGSLT. The tract at residues 1-20 is disordered; it reads MENSHLGSLTTERRNERSKR. The SIS domain occupies 58 to 221; that stretch reads AVGSLKKGGR…STAAMIKMGK (164 aa). E86 serves as the catalytic Proton donor. E117 is an active-site residue.

Belongs to the GCKR-like family. MurNAc-6-P etherase subfamily. In terms of assembly, homodimer.

The catalysed reaction is N-acetyl-D-muramate 6-phosphate + H2O = N-acetyl-D-glucosamine 6-phosphate + (R)-lactate. Its pathway is amino-sugar metabolism; N-acetylmuramate degradation. Specifically catalyzes the cleavage of the D-lactyl ether substituent of MurNAc 6-phosphate, producing GlcNAc 6-phosphate and D-lactate. This is N-acetylmuramic acid 6-phosphate etherase 1 from Bacillus licheniformis (strain ATCC 14580 / DSM 13 / JCM 2505 / CCUG 7422 / NBRC 12200 / NCIMB 9375 / NCTC 10341 / NRRL NRS-1264 / Gibson 46).